Consider the following 685-residue polypeptide: Frizzled-8 (685 aa).

A signal peptide spans 1–27 (MEWGYLLEVTSLLAALAVLQRSSGAAA). At 28-272 (ASAKELACQE…NPFFSQDERA (245 aa)) the chain is on the extracellular side. The FZ domain maps to 30-151 (AKELACQEIT…GNPDTLCMDY (122 aa)). Cystine bridges form between cysteine 35–cysteine 96, cysteine 43–cysteine 89, cysteine 80–cysteine 118, cysteine 107–cysteine 148, and cysteine 111–cysteine 135. N-linked (GlcNAc...) asparagine glycosylation occurs at asparagine 49. 71 to 78 (QFWPLVEI) lines the hexadecanoate pocket. The segment at 95 to 100 (ICLEDY) is wnt-binding. The interval 147–152 (LCMDYN) is wnt-binding. A glycan (N-linked (GlcNAc...) asparagine) is linked at asparagine 152. The tract at residues 155-223 (DLTTAAPSPP…KARPPGGGAA (69 aa)) is disordered. Positions 161–176 (PSPPRRLPPPPPPGEQ) are enriched in pro residues. Low complexity-rich tracts occupy residues 177 to 187 (PPSGSGHSRPP) and 200 to 223 (GSGD…GGAA). The chain crosses the membrane as a helical span at residues 273–293 (FTVFWIGLWSVLCFVSTFATV). At 294–309 (STFLIDMERFKYPERP) the chain is on the cytoplasmic side. The chain crosses the membrane as a helical span at residues 310–330 (IIFLSACYLFVSVGYLVRLVA). Over 331 to 394 (GHEKVACSGG…RYETTGPALC (64 aa)) the chain is Extracellular. The helical transmembrane segment at 395-415 (TVVFLLVYFFGMASSIWWVIL) threads the bilayer. At 416–437 (SLTWFLAAGMKWGNEAIAGYSQ) the chain is on the cytoplasmic side. Residues 438–458 (YFHLAAWLVPSVKSIAVLALS) traverse the membrane as a helical segment. Residues 459-481 (SVDGDPVAGICYVGNQSLDNLRG) are Extracellular-facing. An N-linked (GlcNAc...) asparagine glycan is attached at asparagine 473. A helical membrane pass occupies residues 482 to 502 (FVLAPLVIYLFIGTMFLLAGF). At 503–530 (VSLFRIRSVIKQQGGPTKTHKLEKLMIR) the chain is on the cytoplasmic side. Residues 531 to 551 (LGLFTVLYTVPAAVVVACLFY) traverse the membrane as a helical segment. Residues 552–582 (EQHNRPRWEATHNCPCLRDLQPDQARRPDYA) are Extracellular-facing. The chain crosses the membrane as a helical span at residues 583 to 603 (VFMLKYFMCLVVGITSGVWVW). Over 604–685 (SGKTLESWRA…YPKQMPLSQV (82 aa)) the chain is Cytoplasmic. Residues 606–611 (KTLESW) carry the Lys-Thr-X-X-X-Trp motif, mediates interaction with the PDZ domain of Dvl family members motif. Over residues 631 to 655 (AGGSGPGGSGPGPGGGGGHGGGGGS) the composition is skewed to gly residues. Positions 631–656 (AGGSGPGGSGPGPGGGGGHGGGGGSL) are disordered. A PDZ-binding motif is present at residues 683-685 (SQV).

Belongs to the G-protein coupled receptor Fz/Smo family. In terms of assembly, component of a Wnt-signaling complex that contains a WNT protein, a FZD protein and LRP5 or LRP6. Interacts directly with LRP5 or LRP6; the interaction is promoted by Wnt-binding and signaling and inhibited by DKK1. Interacts (via the PDZ-binding motif) with GPOC (via its PDZ domain). Interacts with RSPO1 and RSPO3. Interacts with glypican GPC3. In terms of processing, ubiquitinated by ZNRF3, leading to its degradation by the proteasome. As to expression, expressed in chondrocytes.

It localises to the membrane. The protein localises to the golgi apparatus. Its subcellular location is the cell membrane. Its function is as follows. Receptor for Wnt proteins. Component of the Wnt-Fzd-LRP5-LRP6 complex that triggers beta-catenin signaling through inducing aggregation of receptor-ligand complexes into ribosome-sized signalosomes. The beta-catenin canonical signaling pathway leads to the activation of disheveled proteins, inhibition of GSK-3 kinase, nuclear accumulation of beta-catenin and activation of Wnt target genes. A second signaling pathway involving PKC and calcium fluxes has been seen for some family members, but it is not yet clear if it represents a distinct pathway or if it can be integrated in the canonical pathway, as PKC seems to be required for Wnt-mediated inactivation of GSK-3 kinase. Both pathways seem to involve interactions with G-proteins. May be involved in transduction and intercellular transmission of polarity information during tissue morphogenesis and/or in differentiated tissues. Coreceptor along with RYK of Wnt proteins, such as WNT1. The chain is Frizzled-8 (Fzd8) from Mus musculus (Mouse).